The sequence spans 236 residues: Small ribosomal subunit protein uS2 (236 aa).

Belongs to the universal ribosomal protein uS2 family.

This Brevibacillus brevis (strain 47 / JCM 6285 / NBRC 100599) protein is Small ribosomal subunit protein uS2.